The chain runs to 485 residues: RAC-beta serine/threonine-protein kinase B (485 aa).

One can recognise a PH domain in the interval 5–109 (MVIKEGWLQK…WIIAIQTVAN (105 aa)). O-linked (GlcNAc) serine glycans are attached at residues serine 132 and serine 135. In terms of domain architecture, Protein kinase spans 156-413 (FDYLKLLGKG…AQEVMSHGFF (258 aa)). ATP-binding positions include 162–170 (LGKGTFGKV) and lysine 185. Aspartate 279 functions as the Proton acceptor in the catalytic mechanism. Threonine 310 is a glycosylation site (O-linked (GlcNAc) threonine). At threonine 313 the chain carries Phosphothreonine. O-linked (GlcNAc) threonine glycosylation occurs at threonine 317. Positions 414–485 (ASINWQDVTE…QFSYSSSIRE (72 aa)) constitute an AGC-kinase C-terminal domain. Residues 454–485 (LTPPDRYDNLDALESEQRPHFPQFSYSSSIRE) form a disordered region. Residues 458–472 (DRYDNLDALESEQRP) are compositionally biased toward basic and acidic residues. Serine 478 is modified (phosphoserine). Residue serine 478 is glycosylated (O-linked (GlcNAc) serine; alternate).

This sequence belongs to the protein kinase superfamily. AGC Ser/Thr protein kinase family. RAC subfamily. In terms of processing, phosphorylation on Thr-313 and Ser-478 is required for full activity. Phosphorylation of the activation loop at Thr-313 by PDPK1/PDK1 is a prerequisite for full activation. Phosphorylation by mTORC2 at Ser-478 in response to growth factors plays a key role in AKT1 activation by facilitating subsequent phosphorylation of the activation loop by PDPK1/PDK1.

It carries out the reaction L-seryl-[protein] + ATP = O-phospho-L-seryl-[protein] + ADP + H(+). The catalysed reaction is L-threonyl-[protein] + ATP = O-phospho-L-threonyl-[protein] + ADP + H(+). Two specific sites, one in the kinase domain (Thr-313) and the other in the C-terminal regulatory region (Ser-478), need to be phosphorylated for its full activation. Its function is as follows. Akt2-b is one of several closely related serine/threonine-protein kinases known as the AKT kinase, and which regulate many processes including metabolism, proliferation, cell survival, growth and angiogenesis. This is mediated through serine and/or threonine phosphorylation of a range of downstream substrates. Over 100 substrate candidates have been reported so far, but for most of them, no isoform specificity has been reported. May be involved in the inhibition of ciliogenesis. This is RAC-beta serine/threonine-protein kinase B (akt2-b) from Xenopus laevis (African clawed frog).